A 269-amino-acid polypeptide reads, in one-letter code: 4-hydroxy-tetrahydrodipicolinate reductase (269 aa).

Residues 10-15 (GSSGRM) and glutamate 36 contribute to the NAD(+) site. NADP(+) is bound at residue arginine 37. Residues 99 to 101 (GTT) and 123 to 126 (APNM) contribute to the NAD(+) site. The active-site Proton donor/acceptor is histidine 156. Residue histidine 157 participates in (S)-2,3,4,5-tetrahydrodipicolinate binding. The active-site Proton donor is the lysine 160. A (S)-2,3,4,5-tetrahydrodipicolinate-binding site is contributed by 166 to 167 (GT).

It belongs to the DapB family.

It localises to the cytoplasm. The catalysed reaction is (S)-2,3,4,5-tetrahydrodipicolinate + NAD(+) + H2O = (2S,4S)-4-hydroxy-2,3,4,5-tetrahydrodipicolinate + NADH + H(+). The enzyme catalyses (S)-2,3,4,5-tetrahydrodipicolinate + NADP(+) + H2O = (2S,4S)-4-hydroxy-2,3,4,5-tetrahydrodipicolinate + NADPH + H(+). Its pathway is amino-acid biosynthesis; L-lysine biosynthesis via DAP pathway; (S)-tetrahydrodipicolinate from L-aspartate: step 4/4. Its function is as follows. Catalyzes the conversion of 4-hydroxy-tetrahydrodipicolinate (HTPA) to tetrahydrodipicolinate. The chain is 4-hydroxy-tetrahydrodipicolinate reductase from Nitrosospira multiformis (strain ATCC 25196 / NCIMB 11849 / C 71).